The primary structure comprises 209 residues: DNA ADP-ribosyl transferase (209 aa).

The DarT domain occupies 9–209 (TPIYHITHID…RVCIRKDWYY (201 aa)). NAD(+)-binding positions include 13–15 (HIT), G22, and L30. Residues 35–53 (SPPKQRSIAYAHIQERRNR) form an NAD(+)-binding element region. Residues 44–50 (YAHIQER) mediate DNA binding. R51 contributes to the NAD(+) binding site. Catalysis depends on R51, which acts as the Proton acceptor. DNA-binding regions lie at residues 75–80 (RSPMLY), 145–148 (SYWA), and 154–158 (REKKQ). Residues 116 to 160 (TDRHGVLSHARFFRQLEELAQLDWEAIQASYWADPPELREKKQAE) form an ADP-ribosylating turn-turn loop region. E160 is an active-site residue.

Belongs to the DarT ADP-ribosyltransferase family. As to quaternary structure, interacts with cognate antitoxin DarG (via C-terminus); this heterodimeric complex neutralizes the toxic effect of DarT by preventing ssDNA binding to DarT and consequently inactivating the toxin by direct protein-protein interactions.

The enzyme catalyses a thymidine in DNA + NAD(+) = an N-(ADP-alpha-D-ribosyl)-thymidine in DNA + nicotinamide + H(+). Functionally, toxic component of the hybrid type II/IV toxin-antitoxin (TA) system DarTG, which plays a crucial role in controlling bacterial growth and bacteriophage infection. In case of phage infection, DarT toxin ADP-ribosylates DNA, which inhibits both viral DNA and RNA synthesis and leads to abortive infection. ADP-ribosylates ssDNA on the second thymidine of the consensus sequence 5'-TNTC-3'; the protein does not auto-modify. Arg-51 is highly flexible, allowing it to assume multiple positions in the crystal structures. Its toxic effect is neutralized by cognate antitoxin DarG. In Thermus sp. (strain 2.9), this protein is DNA ADP-ribosyl transferase.